The primary structure comprises 273 residues: Translation initiation factor 2 subunit alpha (273 aa).

Positions G12 to K83 constitute an S1 motif domain.

It belongs to the eIF-2-alpha family. In terms of assembly, heterotrimer composed of an alpha, a beta and a gamma chain.

EIF-2 functions in the early steps of protein synthesis by forming a ternary complex with GTP and initiator tRNA. The chain is Translation initiation factor 2 subunit alpha from Thermococcus gammatolerans (strain DSM 15229 / JCM 11827 / EJ3).